The following is a 401-amino-acid chain: Adenylosuccinate synthetase (401 aa).

Residues 11–17 and 39–41 each bind GTP; these read GDEGKGK and GHT. Aspartate 12 functions as the Proton acceptor in the catalytic mechanism. Mg(2+) contacts are provided by aspartate 12 and glycine 39. Residues 12–15, 37–40, threonine 127, arginine 141, glutamine 212, threonine 227, and arginine 290 each bind IMP; these read DEGK and NAGH. Histidine 40 (proton donor) is an active-site residue. Residue 286-292 coordinates substrate; the sequence is ATTGRPR. GTP is bound by residues arginine 292, 318 to 320, and 390 to 392; these read KGD and SVG.

This sequence belongs to the adenylosuccinate synthetase family. As to quaternary structure, homodimer. Requires Mg(2+) as cofactor.

Its subcellular location is the cytoplasm. It carries out the reaction IMP + L-aspartate + GTP = N(6)-(1,2-dicarboxyethyl)-AMP + GDP + phosphate + 2 H(+). It participates in purine metabolism; AMP biosynthesis via de novo pathway; AMP from IMP: step 1/2. Its function is as follows. Plays an important role in the de novo pathway of purine nucleotide biosynthesis. Catalyzes the first committed step in the biosynthesis of AMP from IMP. The polypeptide is Adenylosuccinate synthetase (Thermosipho africanus (strain TCF52B)).